A 555-amino-acid chain; its full sequence is MDKRHDPSRRIIAPHGTQLSCKSWLTEAPMRMLMNNLHPDVAERPEDLVVYGGIGRAARDWDCYDKIIEVLQRLEDDETLLVQSGKPVGVFRTHADAPRVLIANSNLVPHWANWEHFNELDKLGLAMYGQMTAGSWIYIGTQGIVQGTYETFVSVAKQHFEGISKGKWILTGGLGGMGGAQTLAGTMAGFSVLACEVDETRIDFRLRTRYVDKKATSLDEALAMIEEANQAGKPVSVGLLANAADVFAELVKRGVTPDVVTDQTSAHDPLNGYLPQGWTMAEAAAMRKTDEAGVVKAAKASMAVQVQAMLDLQTAGAATLDYGNNIRQMAFEMGVENAFDFPGFVPAYIRPLFCEGIGPFRWVALSGDPEDIYKTDAKVKELIPDNPHLHNWLDMARERIAFQGLPARICWVGLKDRARLALAFNEMVKKGELSAPVVIGRDHLDSGSVASPNRETESMLDGSDAVSDWPLLNALLNTASGATWVSLHHGGGVGMGFSQHSGVVIVCDGTDAAAKRVGRVLWNDPATGVMRHADAGYEIAKNCAKEQGLDLPMQE.

NAD(+) contacts are provided by residues 52–53 (GG), glutamine 130, 176–178 (GMG), glutamate 196, arginine 201, 242–243 (NA), 263–267 (QTSAH), 273–274 (YL), and tyrosine 322. Residue cysteine 410 is part of the active site. NAD(+) is bound at residue glycine 492.

Belongs to the urocanase family. NAD(+) is required as a cofactor.

Its subcellular location is the cytoplasm. The catalysed reaction is 4-imidazolone-5-propanoate = trans-urocanate + H2O. It participates in amino-acid degradation; L-histidine degradation into L-glutamate; N-formimidoyl-L-glutamate from L-histidine: step 2/3. In terms of biological role, catalyzes the conversion of urocanate to 4-imidazolone-5-propionate. The sequence is that of Urocanate hydratase from Shewanella baltica (strain OS155 / ATCC BAA-1091).